Reading from the N-terminus, the 472-residue chain is Zinc finger CCCH domain-containing protein 59 (472 aa).

Positions Tyr87–Gly139 are disordered. Residues Ser145–Ser172 form a C3H1-type zinc finger. WD repeat units lie at residues Gly185–Asn226, His261–Phe301, His310–Thr347, Gln350–Val387, and Phe436–Val472.

The polypeptide is Zinc finger CCCH domain-containing protein 59 (ZFWD3) (Arabidopsis thaliana (Mouse-ear cress)).